A 513-amino-acid polypeptide reads, in one-letter code: Proline-rich receptor-like protein kinase PERK3 (513 aa).

Topologically, residues 1-123 (MARSNRCVPQ…SPPSPSRLST (123 aa)) are extracellular. Residue Asn-11 is glycosylated (N-linked (GlcNAc...) asparagine). Over residues 27–36 (LKSRWQQITM) the composition is skewed to polar residues. Positions 27 to 119 (LKSRWQQITM…GFSLSPPSPS (93 aa)) are disordered. Asn-66 carries an N-linked (GlcNAc...) asparagine glycan. Positions 78–89 (PSTSTPPRLGNR) are enriched in low complexity. Positions 99-111 (GQEPTTPTMTPGF) are enriched in polar residues. A helical membrane pass occupies residues 124 to 144 (GAVVGISIGGGVFVLTLIFFL). At 145 to 513 (CKKKRPRDDK…TAQRYGGDSL (369 aa)) the chain is on the cytoplasmic side. Thr-172 is subject to Phosphothreonine. In terms of domain architecture, Protein kinase spans 183 to 334 (FSEANLLGEG…DFGLAKIALD (152 aa)). ATP-binding positions include 189–197 (LGEGGFGFV) and Lys-211. Tyr-256 is modified (phosphotyrosine). Residue Asp-307 is the Proton acceptor of the active site. A Phosphoserine modification is found at Ser-340. Phosphothreonine occurs at positions 341 and 346. Tyr-354 is subject to Phosphotyrosine.

It belongs to the protein kinase superfamily. Ser/Thr protein kinase family. In terms of tissue distribution, expressed at low levels in inflorescence bolt, flower buds, siliques, roots, seedlings and leaves.

Its subcellular location is the cell membrane. It carries out the reaction L-seryl-[protein] + ATP = O-phospho-L-seryl-[protein] + ADP + H(+). It catalyses the reaction L-threonyl-[protein] + ATP = O-phospho-L-threonyl-[protein] + ADP + H(+). This is Proline-rich receptor-like protein kinase PERK3 (PERK3) from Arabidopsis thaliana (Mouse-ear cress).